The following is a 388-amino-acid chain: Ferrochelatase (388 aa).

Fe cation is bound by residues histidine 197 and glutamate 278.

Belongs to the ferrochelatase family.

Its subcellular location is the cytoplasm. The catalysed reaction is heme b + 2 H(+) = protoporphyrin IX + Fe(2+). The protein operates within porphyrin-containing compound metabolism; protoheme biosynthesis; protoheme from protoporphyrin-IX: step 1/1. In terms of biological role, catalyzes the ferrous insertion into protoporphyrin IX. This is Ferrochelatase from Thermosynechococcus vestitus (strain NIES-2133 / IAM M-273 / BP-1).